A 530-amino-acid polypeptide reads, in one-letter code: Alpha-(1,3)-fucosyltransferase 4 (530 aa).

2 disordered regions span residues 1–48 (MRRL…RAVP) and 66–113 (HLGG…TPAD). Residues 1–147 (MRRLWGAARK…GGRRRWRRGR (147 aa)) are Cytoplasmic-facing. Residues 88 to 106 (ASGERQRRLEPQLQHESRC) show a composition bias toward basic and acidic residues. The helical; Signal-anchor for type II membrane protein transmembrane segment at 148 to 172 (GLPWTVCVLAAAGLTCTALITYACW) threads the bilayer. Topologically, residues 173 to 530 (GQLPPLPWAS…IRNLASWFER (358 aa)) are lumenal. Asn-216 and Asn-315 each carry an N-linked (GlcNAc...) asparagine glycan.

The protein belongs to the glycosyltransferase 10 family.

The protein localises to the golgi apparatus. It localises to the golgi stack membrane. The enzyme catalyses a beta-D-galactosyl-(1-&gt;4)-N-acetyl-beta-D-glucosaminyl derivative + GDP-beta-L-fucose = a beta-D-galactosyl-(1-&gt;4)-[alpha-L-fucosyl-(1-&gt;3)]-N-acetyl-beta-D-glucosaminyl derivative + GDP + H(+). It carries out the reaction an N-acetyl-alpha-neuraminyl-(2-&gt;3)-beta-D-galactosyl-(1-&gt;4)-N-acetyl-beta-D-glucosaminyl derivative + GDP-beta-L-fucose = an alpha-Neu5Ac-(2-&gt;3)-beta-D-Gal-(1-&gt;4)-[alpha-L-Fuc-(1-&gt;3)]-beta-D-GlcNAc derivative + GDP + H(+). The catalysed reaction is an alpha-Neu5Ac-(2-&gt;3)-beta-D-Gal-(1-&gt;4)-beta-D-GlcNAc-(1-&gt;3)-beta-D-Gal-(1-&gt;4)-beta-D-GlcNAc derivative + GDP-beta-L-fucose = an alpha-Neu5Ac-(2-&gt;3)-beta-D-Gal-(1-&gt;4)-beta-D-GlcNAc-(1-&gt;3)-beta-D-Gal-(1-&gt;4)-[alpha-L-Fuc-(1-&gt;3)]-beta-D-GlcNAc derivative + GDP + H(+). It catalyses the reaction an alpha-Neu5Ac-(2-&gt;3)-beta-D-Gal-(1-&gt;4)-beta-D-GlcNAc6S derivative + GDP-beta-L-fucose = an alpha-Neu5Ac-(2-&gt;3)-beta-D-Gal-(1-&gt;4)-[alpha-L-Fuc-(1-&gt;3)]-beta-D-GlcNAc6S derivative + GDP + H(+). It participates in protein modification; protein glycosylation. Catalyzes alpha(1-&gt;3) linkage of fucosyl moiety transferred from GDP-beta-L-fucose to N-acetyl glucosamine (GlcNAc) within type 2 lactosamine (LacNAc, Gal-beta(1-&gt;4)GlcNAc) glycan attached to N- or O-linked glycoproteins. Robustly fucosylates nonsialylated distal LacNAc unit of the polylactosamine chain to form Lewis X antigen (CD15), a glycan determinant known to mediate important cellular functions in development and immunity. Fucosylates with lower efficiency sialylated LacNAc acceptors to form sialyl Lewis X and 6-sulfo sialyl Lewis X determinants that serve as recognition epitopes for C-type lectins. Together with FUT7 contributes to SELE, SELL and SELP selectin ligand biosynthesis and selectin-dependent lymphocyte homing, leukocyte migration and blood leukocyte homeostasis. In a cell type specific manner, may also fucosylate the internal LacNAc unit of the polylactosamine chain to form VIM-2 antigen that serves as recognition epitope for SELE. In Pan troglodytes (Chimpanzee), this protein is Alpha-(1,3)-fucosyltransferase 4 (FUT4).